We begin with the raw amino-acid sequence, 96 residues long: Co-chaperonin GroES (96 aa).

The protein belongs to the GroES chaperonin family. Heptamer of 7 subunits arranged in a ring. Interacts with the chaperonin GroEL.

Its subcellular location is the cytoplasm. In terms of biological role, together with the chaperonin GroEL, plays an essential role in assisting protein folding. The GroEL-GroES system forms a nano-cage that allows encapsulation of the non-native substrate proteins and provides a physical environment optimized to promote and accelerate protein folding. GroES binds to the apical surface of the GroEL ring, thereby capping the opening of the GroEL channel. The chain is Co-chaperonin GroES from Polynucleobacter necessarius subsp. necessarius (strain STIR1).